The sequence spans 60 residues: Large ribosomal subunit protein bL32 (60 aa).

The segment covering 1–16 (MAVPRRKTSPSRRGMR) has biased composition (basic residues). The segment at 1-60 (MAVPRRKTSPSRRGMRRSADAIKRPTYVEDKDSGELRRPHHLDLKTGMYKGRQVLKKKDS) is disordered. Basic and acidic residues predominate over residues 17–44 (RSADAIKRPTYVEDKDSGELRRPHHLDL).

The sequence is that of Large ribosomal subunit protein bL32 from Rhodopseudomonas palustris (strain ATCC BAA-98 / CGA009).